The following is a 122-amino-acid chain: Large ribosomal subunit protein uL14 (122 aa).

It belongs to the universal ribosomal protein uL14 family. As to quaternary structure, part of the 50S ribosomal subunit. Forms a cluster with proteins L3 and L19. In the 70S ribosome, L14 and L19 interact and together make contacts with the 16S rRNA in bridges B5 and B8.

Functionally, binds to 23S rRNA. Forms part of two intersubunit bridges in the 70S ribosome. This Brucella abortus (strain 2308) protein is Large ribosomal subunit protein uL14.